A 207-amino-acid chain; its full sequence is Phosphoenolpyruvate guanylyltransferase (207 aa).

The phosphoenolpyruvate site is built by threonine 137, glycine 153, and serine 156.

This sequence belongs to the CofC family.

The enzyme catalyses phosphoenolpyruvate + GTP + H(+) = enolpyruvoyl-2-diphospho-5'-guanosine + diphosphate. It participates in cofactor biosynthesis; coenzyme F420 biosynthesis. In terms of biological role, guanylyltransferase that catalyzes the activation of phosphoenolpyruvate (PEP) as enolpyruvoyl-2-diphospho-5'-guanosine, via the condensation of PEP with GTP. It is involved in the biosynthesis of coenzyme F420, a hydride carrier cofactor. This chain is Phosphoenolpyruvate guanylyltransferase, found in Sphaerobacter thermophilus (strain ATCC 49802 / DSM 20745 / KCCM 41009 / NCIMB 13125 / S 6022).